The primary structure comprises 128 residues: Fluoride-specific ion channel FluC (128 aa).

Helical transmembrane passes span Leu-4–Ile-24, Pro-37–Ile-57, Leu-63–Phe-83, and Ile-99–Ile-119. Na(+)-binding residues include Gly-78 and Thr-81.

The protein belongs to the fluoride channel Fluc/FEX (TC 1.A.43) family.

Its subcellular location is the cell membrane. The catalysed reaction is fluoride(in) = fluoride(out). Na(+) is not transported, but it plays an essential structural role and its presence is essential for fluoride channel function. Its function is as follows. Fluoride-specific ion channel. Important for reducing fluoride concentration in the cell, thus reducing its toxicity. This Clostridium novyi (strain NT) protein is Fluoride-specific ion channel FluC.